A 144-amino-acid chain; its full sequence is Large ribosomal subunit protein uL15 (144 aa).

Residues 1-56 (MELNNLKPAAGAKHAKRRVGRGIGSGLGKTAGRGHKGQKSRSGGFHKVGFEGGQMP) form a disordered region. A compositionally biased stretch (gly residues) spans 21-31 (RGIGSGLGKTA).

This sequence belongs to the universal ribosomal protein uL15 family. In terms of assembly, part of the 50S ribosomal subunit.

Its function is as follows. Binds to the 23S rRNA. The polypeptide is Large ribosomal subunit protein uL15 (Burkholderia cenocepacia (strain HI2424)).